A 391-amino-acid chain; its full sequence is MDATANPKAGQLTIVGSGIASINHMTLQAVACIETADVVCYVVADGATEAFIRKKNENCIDLYPLYSETKERTDTYIQMAEFMLNHVRAGKNVVGVFYGHPGVFVCPTHRAIYIARNEGYRAVMLPGLSAEDCLYADLGIDPSTVGCITYEATDMLVYNRPLNSSSHLVLYQVGIVGKADFKFAYDPKENHHFGKLIDRLELEYGPDHTVVHYIAPIFPTEEPVMERFTIGQLKLKENSDKIATISTFYLPPKAPSAKVSLNREFLRSLNIADSRDPMTPFPWNPTAAPYGEREKKVILELESHVPPPGYRPLKKNSGLAQALEKLSLDTRALAAWKTDRKAYADSVSGLTDDERDALASGKHAQLSGALKEGGVPMNHAQLTFFFIISNL.

Positions 1–253 (MDATANPKAG…TISTFYLPPK (253 aa)) are methyltransferase domain. Catalysis depends on residues Arg-72, Tyr-76, and Tyr-98. S-adenosyl-L-methionine-binding residues include Tyr-98, His-100, Val-103, Ala-130, Gln-172, Ala-215, Ser-246, and Thr-247. The clasp domain stretch occupies residues 254-373 (APSAKVSLNR…AQLSGALKEG (120 aa)). The precursor leader stretch occupies residues 374 to 376 (GVP). Leu-382 carries the post-translational modification N-methylleucine. Residues Phe-385 and Phe-386 each carry the N-methylphenylalanine modification. N-methylisoleucine is present on residues Ile-387 and Ile-388.

This sequence in the N-terminal section; belongs to the precorrin methyltransferase family. As to quaternary structure, homodimer. CmaMA automethylates at Leu-382, Phe-385, Phe-386, Ile-387 and Ile-388 before being processed by the prolyloligopeptidase ledP which likely forms a peptidyl ester upon removal of the follower propeptide, which then undergoes macrocyclization with the N-terminus of the modified core peptide. Peptide backbone alpha-N-methylations change the physicochemical properties of amide bonds to provide structural constraints and other favorable characteristics including biological membrane permeability to peptides.

Its pathway is secondary metabolite biosynthesis. In terms of biological role, fusion protein of the methyltransferase cmaM and a type I borosin core peptide; part of the gene cluster that mediates the biosynthesis of a type I borosin, a highly methylated cyclic peptide with potent biological activities. Type I borosins derive from the C-terminus of the fusion protein, and it is the same protein that methylates its own C-terminus using S-adenosyl methionine (SAM). The C-terminus is subsequently cleaved off and macrocyclized by a prolyloligopeptidase to give the final product. The polypeptide is Methyltransferase/ribosomally synthesized type I borosin cyclic peptide precursor cmaMA (Coprinopsis marcescibilis (Agaric fungus)).